The primary structure comprises 423 residues: Alpha-1-antichymotrypsin (423 aa).

An N-terminal signal peptide occupies residues 1–23 (MERMLPFLALGLLVAGFCPAVLC). 5 N-linked (GlcNAc...) asparagine glycosylation sites follow: N93, N106, N127, N186, and N271. The interval 369–394 (GTEASAATAVKITLLSALVDPMTIVR) is RCL.

Belongs to the serpin family. As to quaternary structure, interacts with DNAJC1. As to expression, plasma.

It is found in the secreted. Functionally, although its physiological function is unclear, it can inhibit neutrophil cathepsin G and mast cell chymase, both of which can convert angiotensin-1 to the active angiotensin-2. This chain is Alpha-1-antichymotrypsin (SERPINA3), found in Pongo abelii (Sumatran orangutan).